The chain runs to 479 residues: Sulfate adenylyltransferase subunit 1 (479 aa).

The tr-type G domain maps to 25–239 (KSLLRFLTCG…EVLETVDIQR (215 aa)). Positions 34 to 41 (GSVDDGKS) are G1. GTP is bound at residue 34–41 (GSVDDGKS). The interval 92-96 (GITID) is G2. The G3 stretch occupies residues 113 to 116 (DTPG). GTP-binding positions include 113-117 (DTPGH) and 168-171 (NKMD). Residues 168–171 (NKMD) form a G4 region. A G5 region spans residues 206 to 208 (SAL).

It belongs to the TRAFAC class translation factor GTPase superfamily. Classic translation factor GTPase family. CysN/NodQ subfamily. In terms of assembly, heterodimer composed of CysD, the smaller subunit, and CysN.

It carries out the reaction sulfate + ATP + H(+) = adenosine 5'-phosphosulfate + diphosphate. The protein operates within sulfur metabolism; hydrogen sulfide biosynthesis; sulfite from sulfate: step 1/3. Its function is as follows. With CysD forms the ATP sulfurylase (ATPS) that catalyzes the adenylation of sulfate producing adenosine 5'-phosphosulfate (APS) and diphosphate, the first enzymatic step in sulfur assimilation pathway. APS synthesis involves the formation of a high-energy phosphoric-sulfuric acid anhydride bond driven by GTP hydrolysis by CysN coupled to ATP hydrolysis by CysD. This Salmonella typhi protein is Sulfate adenylyltransferase subunit 1.